The chain runs to 360 residues: MLRVFEAFAGYGSQRLALIKANIPHEIVGISEIEGDVLLSYSAIHENLLEERNKNIKLTDDEMRDYLKNINIPLDYKTFENRADKLGGQKLKDMYIANKLNKNFGDIRSIDPKKLPDFDFFTYSFPCQDISVAGYQNGLVADSGTRSSLLWECCKIIEHKKPKYLMMENVKNLVGKNHKVNFNKFLLYLESLGYTNYWDILNARDFGIPQNRERVFCISILNPNEDFTFPQKQNLTLSMNDLLEENVSEKFYLKNNQVSDEPILQDYIYCLDSNYWKGTFLKDFLSKKRRQLVSGKVRPDGKYPARRLTPRETWRFMGVEDTNFDKASILVSNTSLYKQSGNSIVVPVLESLFKELFKSQ.

Residues 2–360 form the SAM-dependent MTase C5-type domain; the sequence is LRVFEAFAGY…SLFKELFKSQ (359 aa). Cys-127 is an active-site residue.

This sequence belongs to the class I-like SAM-binding methyltransferase superfamily. C5-methyltransferase family.

The enzyme catalyses a 2'-deoxycytidine in DNA + S-adenosyl-L-methionine = a 5-methyl-2'-deoxycytidine in DNA + S-adenosyl-L-homocysteine + H(+). In terms of biological role, a methylase, recognizes the double-stranded sequence 5'-CCNGG-3', methylates C-2 on both strands, and protects the DNA from cleavage by the ScrFI endonuclease. The protein is Type II methyltransferase M2.ScrFI (scrFIBM) of Lactococcus lactis subsp. cremoris (Streptococcus cremoris).